A 508-amino-acid chain; its full sequence is Ribonuclease Y (508 aa).

Residues 2 to 22 form a helical membrane-spanning segment; it reads IITALIAIAVGFLIGYLARKI. Positions 198 to 261 constitute a KH domain; it reads TVSVVTLPND…EVARIALEKL (64 aa). An HD domain is found at 324-417; it reads VLKHSIEVAH…VQAADAISAA (94 aa).

The protein belongs to the RNase Y family.

The protein localises to the cell membrane. Its function is as follows. Endoribonuclease that initiates mRNA decay. The chain is Ribonuclease Y from Thermoanaerobacter pseudethanolicus (strain ATCC 33223 / 39E) (Clostridium thermohydrosulfuricum).